The chain runs to 234 residues: Adenosine 5'-phosphosulfate reductase (234 aa).

Residues Cys-120, Cys-121, Cys-203, and Cys-206 each contribute to the [4Fe-4S] cluster site. Cys-229 functions as the Nucleophile; cysteine thiosulfonate intermediate in the catalytic mechanism.

The protein belongs to the PAPS reductase family. CysH subfamily. It depends on [4Fe-4S] cluster as a cofactor.

It localises to the cytoplasm. It catalyses the reaction [thioredoxin]-disulfide + sulfite + AMP + 2 H(+) = adenosine 5'-phosphosulfate + [thioredoxin]-dithiol. It functions in the pathway sulfur metabolism; hydrogen sulfide biosynthesis; sulfite from sulfate. Its function is as follows. Catalyzes the formation of sulfite from adenosine 5'-phosphosulfate (APS) using thioredoxin as an electron donor. The polypeptide is Adenosine 5'-phosphosulfate reductase (Bacillus thuringiensis subsp. konkukian (strain 97-27)).